We begin with the raw amino-acid sequence, 135 residues long: Poly [ADP-ribose] polymerase 1 (135 aa).

The PARP alpha-helical domain occupies Q1 to K21. Residues D30–K135 enclose the PARP catalytic domain. NAD(+) contacts are provided by residues H104 to S106, G113, and R120. The active site involves K135.

Belongs to the ARTD/PARP family. Homodimer; PARP-type zinc-fingers from separate parp1 molecules form a dimer module that specifically recognizes DNA strand breaks. Post-translationally, poly-ADP-ribosylated on serine, glutamate and aspartate residues by autocatalysis. Auto-ADP-ribosylation on serine takes place following interaction with HPF1. Auto poly-ADP-ribosylation on serine residues promotes its dissociation from chromatin.

The protein localises to the chromosome. It is found in the nucleus. Its subcellular location is the nucleolus. The protein resides in the cytoplasm. It localises to the cytosol. The catalysed reaction is NAD(+) + (ADP-D-ribosyl)n-acceptor = nicotinamide + (ADP-D-ribosyl)n+1-acceptor + H(+).. It catalyses the reaction L-seryl-[protein] + NAD(+) = O-(ADP-D-ribosyl)-L-seryl-[protein] + nicotinamide + H(+). The enzyme catalyses L-aspartyl-[protein] + NAD(+) = 4-O-(ADP-D-ribosyl)-L-aspartyl-[protein] + nicotinamide. It carries out the reaction L-glutamyl-[protein] + NAD(+) = 5-O-(ADP-D-ribosyl)-L-glutamyl-[protein] + nicotinamide. The catalysed reaction is L-tyrosyl-[protein] + NAD(+) = O-(ADP-D-ribosyl)-L-tyrosyl-[protein] + nicotinamide + H(+). It catalyses the reaction L-histidyl-[protein] + NAD(+) = N(tele)-(ADP-D-ribosyl)-L-histidyl-[protein] + nicotinamide + H(+). Its activity is regulated as follows. ADP-ribosyltransferase activity is regulated via an allosteric activation mechanism. In absence of activation signal, parp1 is autoinhibited by the PARP alpha-helical domain (also named HD region), which prevents effective NAD(+)-binding. Activity is highly stimulated by signals, such as DNA strand breaks. Binding to damaged DNA unfolds the PARP alpha-helical domain, relieving autoinhibition. Poly-ADP-ribosyltransferase activity is tightly regulated and parp1 is removed from damaged chromatin following initial poly-ADP-ribosylation of chromatin to avoid prolonged residence (trapping) that has cytotoxic consequences. A number of factors or post-translational modifications (auto-poly-ADP-ribosylation) promote parp1 removal from chromatin. Functionally, poly-ADP-ribosyltransferase that mediates poly-ADP-ribosylation of proteins and plays a key role in DNA repair. Mediates glutamate, aspartate, serine, histidine or tyrosine ADP-ribosylation of proteins: the ADP-D-ribosyl group of NAD(+) is transferred to the acceptor carboxyl group of target residues and further ADP-ribosyl groups are transferred to the 2'-position of the terminal adenosine moiety, building up a polymer with an average chain length of 20-30 units. Serine ADP-ribosylation of proteins constitutes the primary form of ADP-ribosylation of proteins in response to DNA damage. Specificity for the different amino acids is conferred by interacting factors, such as hpf1 and nmnat1. Following interaction with hpf1, catalyzes serine ADP-ribosylation of target proteins; hpf1 confers serine specificity by completing the parp1 active site. Also catalyzes tyrosine ADP-ribosylation of target proteins following interaction with hpf1. Following interaction with nmnat1, catalyzes glutamate and aspartate ADP-ribosylation of target proteins; nmnat1 confers glutamate and aspartate specificity. Parp1 initiates the repair of DNA breaks: recognizes and binds DNA breaks within chromatin and recruits hpf1, licensing serine ADP-ribosylation of target proteins, such as histones (H2BS6ADPr and H3S10ADPr), thereby promoting decompaction of chromatin and the recruitment of repair factors leading to the reparation of DNA strand breaks. In addition to base excision repair (BER) pathway, also involved in double-strand breaks (DSBs) repair. Mediates the poly-ADP-ribosylation of a number of proteins. In addition to proteins, also able to ADP-ribosylate DNA: catalyzes ADP-ribosylation of DNA strand break termini containing terminal phosphates and a 2'-OH group in single- and double-stranded DNA, respectively. Parp1-mediated DNA repair in neurons plays a role in sleep: senses DNA damage in neurons and promotes sleep, facilitating efficient DNA repair. In addition to DNA repair, also involved in other processes, such as transcription regulation, programmed cell death, membrane repair, adipogenesis and innate immunity. Acts as a repressor of transcription: binds to nucleosomes and modulates chromatin structure in a manner similar to histone H1, thereby altering RNA polymerase II. Acts both as a positive and negative regulator of transcription elongation, depending on the context. Poly-ADP-ribose chains generated by parp1 also play a role in poly-ADP-ribose-dependent cell death, a process named parthanatos. Also acts as a negative regulator of the cGAS-STING pathway by mediating poly-ADP-ribosylation and inactivation of cgas. Acts as a negative regulator of adipogenesis by catalyzing poly ADP-ribosylation of histone H2B on 'Glu-35' (H2BE35ADPr). This is Poly [ADP-ribose] polymerase 1 (parp1) from Oncorhynchus masou (Cherry salmon).